Here is a 219-residue protein sequence, read N- to C-terminus: Thiamine-phosphate synthase (219 aa).

Residues 44–48 and Asn-79 each bind 4-amino-2-methyl-5-(diphosphooxymethyl)pyrimidine; that span reads QFREK. 2 residues coordinate Mg(2+): Asp-80 and Asp-99. Ser-117 provides a ligand contact to 4-amino-2-methyl-5-(diphosphooxymethyl)pyrimidine. 143-145 is a 2-[(2R,5Z)-2-carboxy-4-methylthiazol-5(2H)-ylidene]ethyl phosphate binding site; sequence TST. A 4-amino-2-methyl-5-(diphosphooxymethyl)pyrimidine-binding site is contributed by Lys-146. 2-[(2R,5Z)-2-carboxy-4-methylthiazol-5(2H)-ylidene]ethyl phosphate-binding positions include Gly-175 and 195–196; that span reads IS.

It belongs to the thiamine-phosphate synthase family. The cofactor is Mg(2+).

The enzyme catalyses 2-[(2R,5Z)-2-carboxy-4-methylthiazol-5(2H)-ylidene]ethyl phosphate + 4-amino-2-methyl-5-(diphosphooxymethyl)pyrimidine + 2 H(+) = thiamine phosphate + CO2 + diphosphate. The catalysed reaction is 2-(2-carboxy-4-methylthiazol-5-yl)ethyl phosphate + 4-amino-2-methyl-5-(diphosphooxymethyl)pyrimidine + 2 H(+) = thiamine phosphate + CO2 + diphosphate. It catalyses the reaction 4-methyl-5-(2-phosphooxyethyl)-thiazole + 4-amino-2-methyl-5-(diphosphooxymethyl)pyrimidine + H(+) = thiamine phosphate + diphosphate. It functions in the pathway cofactor biosynthesis; thiamine diphosphate biosynthesis; thiamine phosphate from 4-amino-2-methyl-5-diphosphomethylpyrimidine and 4-methyl-5-(2-phosphoethyl)-thiazole: step 1/1. In terms of biological role, condenses 4-methyl-5-(beta-hydroxyethyl)thiazole monophosphate (THZ-P) and 2-methyl-4-amino-5-hydroxymethyl pyrimidine pyrophosphate (HMP-PP) to form thiamine monophosphate (TMP). The chain is Thiamine-phosphate synthase from Bacillus cereus (strain ATCC 14579 / DSM 31 / CCUG 7414 / JCM 2152 / NBRC 15305 / NCIMB 9373 / NCTC 2599 / NRRL B-3711).